A 101-amino-acid chain; its full sequence is MKTKLKIGDSVKILSGKDKGRIGKIASINRKKNKVIVESCNMVKKVIKARTPQEKGKIIDKEAAIDISNVIIFIKGTSSRLGIRFENNEKIRYLKKNGQRI.

Belongs to the universal ribosomal protein uL24 family. As to quaternary structure, part of the 50S ribosomal subunit.

Functionally, one of two assembly initiator proteins, it binds directly to the 5'-end of the 23S rRNA, where it nucleates assembly of the 50S subunit. Its function is as follows. One of the proteins that surrounds the polypeptide exit tunnel on the outside of the subunit. The polypeptide is Large ribosomal subunit protein uL24 (Borrelia garinii subsp. bavariensis (strain ATCC BAA-2496 / DSM 23469 / PBi) (Borreliella bavariensis)).